A 206-amino-acid polypeptide reads, in one-letter code: Small ribosomal subunit protein eS8 (206 aa).

The interval 1–37 (MGISRDSRHKRSATGAKRAQFRKKRKFELGRQPANTK) is disordered.

Belongs to the eukaryotic ribosomal protein eS8 family. As to quaternary structure, component of the small ribosomal subunit. Mature ribosomes consist of a small (40S) and a large (60S) subunit. The 40S subunit contains about 32 different proteins and 1 molecule of RNA (18S). The 60S subunit contains 45 different proteins and 3 molecules of RNA (25S, 5.8S and 5S).

The protein resides in the cytoplasm. Functionally, component of the ribosome, a large ribonucleoprotein complex responsible for the synthesis of proteins in the cell. The small ribosomal subunit (SSU) binds messenger RNAs (mRNAs) and translates the encoded message by selecting cognate aminoacyl-transfer RNA (tRNA) molecules. The large subunit (LSU) contains the ribosomal catalytic site termed the peptidyl transferase center (PTC), which catalyzes the formation of peptide bonds, thereby polymerizing the amino acids delivered by tRNAs into a polypeptide chain. The nascent polypeptides leave the ribosome through a tunnel in the LSU and interact with protein factors that function in enzymatic processing, targeting, and the membrane insertion of nascent chains at the exit of the ribosomal tunnel. This chain is Small ribosomal subunit protein eS8 (RPS8A), found in Candida albicans (strain SC5314 / ATCC MYA-2876) (Yeast).